The chain runs to 576 residues: Interleukin-1 receptor type 1 (576 aa).

The first 19 residues, 1–19 (MENMKVLLGLICLMVPLLS), serve as a signal peptide directing secretion. Residues 20–338 (LEIDVCTEYP…QLIYPVPDFK (319 aa)) lie on the Extracellular side of the membrane. Intrachain disulfides connect Cys-25-Cys-107, Cys-46-Cys-99, and Cys-145-Cys-199. 3 consecutive Ig-like C2-type domains span residues 25–115 (CTEY…VTVT), 121–213 (PGLC…YPVT), and 229–329 (PVIL…AHVQ). 7 N-linked (GlcNAc...) asparagine glycosylation sites follow: Asn-63, Asn-103, Asn-174, Asn-236, Asn-252, Asn-266, and Asn-300. A disulfide bond links Cys-251 and Cys-315. Residues 339–359 (NYLIGGFIILTATIVCCVCIY) form a helical membrane-spanning segment. Residues 360–576 (KVFKVDIVLW…LPAATHLPLG (217 aa)) are Cytoplasmic-facing. One can recognise a TIR domain in the interval 386 to 541 (KTYDAYILYP…RFWKNLRYQM (156 aa)). The active site involves Glu-473. Tyr-499 carries the post-translational modification Phosphotyrosine. Position 556 is a phosphothreonine; by PKC (Thr-556).

The protein belongs to the interleukin-1 receptor family. As to quaternary structure, the interleukin-1 receptor complex is a heterodimer of IL1R1 and IL1RAP. Interacts with PIK3R1. Interacts with IL1A. In terms of processing, a soluble form (sIL1R1) is probably produced by proteolytic cleavage at the cell surface (shedding). Post-translationally, rapidly phosphorylated on Tyr-499 in response to IL-1, which creates a SH2 binding site for the PI 3-kinase regulatory subunit PIK3R1. As to expression, isoform 2 is expressed in various brain tissues.

It is found in the membrane. The protein resides in the cell membrane. It localises to the secreted. It carries out the reaction NAD(+) + H2O = ADP-D-ribose + nicotinamide + H(+). Its function is as follows. Receptor for IL1A, IL1B and IL1RN. After binding to interleukin-1 associates with the coreceptor IL1RAP to form the high affinity interleukin-1 receptor complex which mediates interleukin-1-dependent activation of NF-kappa-B, MAPK and other pathways. Signaling involves the recruitment of adapter molecules such as TOLLIP, MYD88, and IRAK1 or IRAK2 via the respective TIR domains of the receptor/coreceptor subunits. Binds ligands with comparable affinity and binding of antagonist IL1RN prevents association with IL1RAP to form a signaling complex. Involved in IL1B-mediated costimulation of IFNG production from T-helper 1 (Th1) cells. Functionally, unable to mediate canonical IL-1 signaling. Cooperates with IL1RAP isoform 3 to mediate IL1B-induced neuronal activity including IL1B-potentiated NMDA-induced calcium influx mediated by Akt kinase activation. The chain is Interleukin-1 receptor type 1 (Il1r1) from Mus musculus (Mouse).